Here is a 60-residue protein sequence, read N- to C-terminus: Protein YoaG (60 aa).

In terms of assembly, homodimer.

The sequence is that of Protein YoaG (yoaG) from Escherichia coli O157:H7.